The primary structure comprises 618 residues: 1-deoxy-D-xylulose-5-phosphate synthase (618 aa).

Residues His-72 and 113-115 (GHA) each bind thiamine diphosphate. Asp-144 serves as a coordination point for Mg(2+). Residues 145-146 (GA), Asn-173, His-284, and Glu-359 each bind thiamine diphosphate. Position 173 (Asn-173) interacts with Mg(2+).

This sequence belongs to the transketolase family. DXPS subfamily. As to quaternary structure, homodimer. Mg(2+) serves as cofactor. It depends on thiamine diphosphate as a cofactor.

It carries out the reaction D-glyceraldehyde 3-phosphate + pyruvate + H(+) = 1-deoxy-D-xylulose 5-phosphate + CO2. The protein operates within metabolic intermediate biosynthesis; 1-deoxy-D-xylulose 5-phosphate biosynthesis; 1-deoxy-D-xylulose 5-phosphate from D-glyceraldehyde 3-phosphate and pyruvate: step 1/1. Catalyzes the acyloin condensation reaction between C atoms 2 and 3 of pyruvate and glyceraldehyde 3-phosphate to yield 1-deoxy-D-xylulose-5-phosphate (DXP). The protein is 1-deoxy-D-xylulose-5-phosphate synthase of Dictyoglomus turgidum (strain DSM 6724 / Z-1310).